Consider the following 166-residue polypeptide: NAD(P)H-quinone oxidoreductase subunit I, chloroplastic (166 aa).

4Fe-4S ferredoxin-type domains lie at 55–84 (GRIH…VDWK) and 95–124 (LNYS…MTEE). 8 residues coordinate [4Fe-4S] cluster: Cys-64, Cys-67, Cys-70, Cys-74, Cys-104, Cys-107, Cys-110, and Cys-114.

Belongs to the complex I 23 kDa subunit family. As to quaternary structure, NDH is composed of at least 16 different subunits, 5 of which are encoded in the nucleus. The cofactor is [4Fe-4S] cluster.

The protein resides in the plastid. The protein localises to the chloroplast thylakoid membrane. It carries out the reaction a plastoquinone + NADH + (n+1) H(+)(in) = a plastoquinol + NAD(+) + n H(+)(out). The enzyme catalyses a plastoquinone + NADPH + (n+1) H(+)(in) = a plastoquinol + NADP(+) + n H(+)(out). In terms of biological role, NDH shuttles electrons from NAD(P)H:plastoquinone, via FMN and iron-sulfur (Fe-S) centers, to quinones in the photosynthetic chain and possibly in a chloroplast respiratory chain. The immediate electron acceptor for the enzyme in this species is believed to be plastoquinone. Couples the redox reaction to proton translocation, and thus conserves the redox energy in a proton gradient. The chain is NAD(P)H-quinone oxidoreductase subunit I, chloroplastic from Espeletia timotensis (Andean giant rosette).